A 45-amino-acid polypeptide reads, in one-letter code: Large ribosomal subunit protein bL34 (45 aa).

The interval 1–27 (MTKRTLGGTSRKRKRVSGFRVRMRTHT) is disordered. Over residues 10–27 (SRKRKRVSGFRVRMRTHT) the composition is skewed to basic residues.

The protein belongs to the bacterial ribosomal protein bL34 family.

The protein is Large ribosomal subunit protein bL34 of Prochlorococcus marinus (strain MIT 9211).